The chain runs to 429 residues: Enolase (429 aa).

Q163 serves as a coordination point for (2R)-2-phosphoglycerate. E205 serves as the catalytic Proton donor. D242, E287, and D314 together coordinate Mg(2+). Positions 339, 368, 369, and 390 each coordinate (2R)-2-phosphoglycerate. Catalysis depends on K339, which acts as the Proton acceptor.

This sequence belongs to the enolase family. Mg(2+) is required as a cofactor.

The protein localises to the cytoplasm. It is found in the secreted. Its subcellular location is the cell surface. The catalysed reaction is (2R)-2-phosphoglycerate = phosphoenolpyruvate + H2O. The protein operates within carbohydrate degradation; glycolysis; pyruvate from D-glyceraldehyde 3-phosphate: step 4/5. Functionally, catalyzes the reversible conversion of 2-phosphoglycerate (2-PG) into phosphoenolpyruvate (PEP). It is essential for the degradation of carbohydrates via glycolysis. The chain is Enolase from Salinibacter ruber (strain DSM 13855 / M31).